We begin with the raw amino-acid sequence, 326 residues long: Acetyl-coenzyme A carboxylase carboxyl transferase subunit alpha (326 aa).

Residues 46–300 (EIEARAAELR…KEALLRHLDE (255 aa)) form the CoA carboxyltransferase C-terminal domain.

This sequence belongs to the AccA family. As to quaternary structure, acetyl-CoA carboxylase is a heterohexamer composed of biotin carboxyl carrier protein (AccB), biotin carboxylase (AccC) and two subunits each of ACCase subunit alpha (AccA) and ACCase subunit beta (AccD).

The protein localises to the cytoplasm. The catalysed reaction is N(6)-carboxybiotinyl-L-lysyl-[protein] + acetyl-CoA = N(6)-biotinyl-L-lysyl-[protein] + malonyl-CoA. It participates in lipid metabolism; malonyl-CoA biosynthesis; malonyl-CoA from acetyl-CoA: step 1/1. Component of the acetyl coenzyme A carboxylase (ACC) complex. First, biotin carboxylase catalyzes the carboxylation of biotin on its carrier protein (BCCP) and then the CO(2) group is transferred by the carboxyltransferase to acetyl-CoA to form malonyl-CoA. This Gloeobacter violaceus (strain ATCC 29082 / PCC 7421) protein is Acetyl-coenzyme A carboxylase carboxyl transferase subunit alpha.